We begin with the raw amino-acid sequence, 124 residues long: Small ribosomal subunit protein uS12 (124 aa).

The tract at residues 105-124 is disordered; the sequence is SGVNDRRQGRSKYGAKRPKS. Positions 113 to 124 are enriched in basic residues; the sequence is GRSKYGAKRPKS.

The protein belongs to the universal ribosomal protein uS12 family. As to quaternary structure, part of the 30S ribosomal subunit. Contacts proteins S8 and S17. May interact with IF1 in the 30S initiation complex.

Functionally, with S4 and S5 plays an important role in translational accuracy. Its function is as follows. Interacts with and stabilizes bases of the 16S rRNA that are involved in tRNA selection in the A site and with the mRNA backbone. Located at the interface of the 30S and 50S subunits, it traverses the body of the 30S subunit contacting proteins on the other side and probably holding the rRNA structure together. The combined cluster of proteins S8, S12 and S17 appears to hold together the shoulder and platform of the 30S subunit. The chain is Small ribosomal subunit protein uS12 from Idiomarina loihiensis (strain ATCC BAA-735 / DSM 15497 / L2-TR).